Consider the following 450-residue polypeptide: MDQEIFIIGLNHRTADVEVREKFALTGCTSLEPAVIPLGNGISEVIILSTCNRVEIMVAGRGDDVPDTVLSLWANARGQHPEELRPYVYIHRGLAAVEHLFTVASSLDSMVLGEPQILGQLKDAYRDAVARNTTRVILNRMMHKAFSVAKRVRTETAVASSAVSISYAAVELAKRIFGEMNEYKAMLIGAGEMAELAATHLLNCGVNKIYVANRTFERGLELAKQFDGEAILFEELFTRLPEVDIVISSTGAQQAVIRAKDIRDVLKRRKNRPMFFIDIAVPRDIDPDVNNLDNVYLYDIDDLKEVVEENLSHRREEAAKAKAIVRSETEVFGRWLRSLDLQPTIVDMYSRSTEIAQEELLKTLRRIGPVDESTQKALEAMLNAVVKKIHHEPICFLKRRYEEEDSGQRYIDFARRMFNLDNEPEQPEAHKNRKRPQPDLPAGCPGKTIL.

Residues 50-53 (TCNR), Ser-109, 114-116 (EPQ), and Gln-120 contribute to the substrate site. The Nucleophile role is filled by Cys-51. 189 to 194 (GAGEMA) contacts NADP(+). The segment at 422–450 (NEPEQPEAHKNRKRPQPDLPAGCPGKTIL) is disordered.

It belongs to the glutamyl-tRNA reductase family. Homodimer.

The catalysed reaction is (S)-4-amino-5-oxopentanoate + tRNA(Glu) + NADP(+) = L-glutamyl-tRNA(Glu) + NADPH + H(+). The protein operates within porphyrin-containing compound metabolism; protoporphyrin-IX biosynthesis; 5-aminolevulinate from L-glutamyl-tRNA(Glu): step 1/2. In terms of biological role, catalyzes the NADPH-dependent reduction of glutamyl-tRNA(Glu) to glutamate 1-semialdehyde (GSA). This Oleidesulfovibrio alaskensis (strain ATCC BAA-1058 / DSM 17464 / G20) (Desulfovibrio alaskensis) protein is Glutamyl-tRNA reductase.